Consider the following 723-residue polypeptide: Catalase-peroxidase (723 aa).

Positions 97–225 (WHAAGSYRVT…LAAVQMGLIY (129 aa)) form a cross-link, tryptophyl-tyrosyl-methioninium (Trp-Tyr) (with M-251). H98 acts as the Proton acceptor in catalysis. A cross-link (tryptophyl-tyrosyl-methioninium (Tyr-Met) (with W-97)) is located at residues 225-251 (YVNPEGVNGKSDPLATAAQMRETFARM). H266 contributes to the heme b binding site.

It belongs to the peroxidase family. Peroxidase/catalase subfamily. As to quaternary structure, homodimer or homotetramer. The cofactor is heme b. In terms of processing, formation of the three residue Trp-Tyr-Met cross-link is important for the catalase, but not the peroxidase activity of the enzyme.

It catalyses the reaction H2O2 + AH2 = A + 2 H2O. It carries out the reaction 2 H2O2 = O2 + 2 H2O. Bifunctional enzyme with both catalase and broad-spectrum peroxidase activity. Involved in tumorigenesis. In Rhizobium radiobacter (Agrobacterium tumefaciens), this protein is Catalase-peroxidase.